The chain runs to 391 residues: Phosphoprotein (391 aa).

Phosphothreonine is present on residues Thr-10, Thr-16, and Thr-39. Over residues 55–65 (KNIQYPTTSHQ) the composition is skewed to polar residues. Residues 55–90 (KNIQYPTTSHQGSKSKGRGSGARPIIVSSSEGGTGG) form a disordered region. Ser-69 is modified (phosphoserine). Phosphothreonine is present on residues Thr-91, Thr-150, and Thr-165. The segment at 145–208 (TSTPVTEFKR…PQQDSTPANV (64 aa)) is disordered. Ser-188 is modified (phosphoserine). The interval 216–279 (ISANEIMDLL…MATVKIMDPG (64 aa)) is multimerization. A coiled-coil region spans residues 218 to 245 (ANEIMDLLRGMDARLQHLEQKVDKVLAQ). Thr-250 bears the Phosphothreonine mark. The residue at position 257 (Ser-257) is a Phosphoserine. 2 positions are modified to phosphothreonine: Thr-258 and Thr-282. Ser-292 and Ser-294 each carry phosphoserine. At Thr-298 the chain carries Phosphothreonine. Residues Ser-301 and Ser-374 each carry the phosphoserine modification. Positions 343–391 (AGRKVMITKMITDCVANPQMKQVFEQRLAKASTEDALNDIKRDIIRSAI) are interaction with the nucleoprotein. The residue at position 375 (Thr-375) is a Phosphothreonine.

Belongs to the rubulavirus/avulavirus P protein family. Homotetramer. Interacts (via multimerization domain) with polymerase L; this interaction forms the polymerase L-P complex. Interacts (via N-terminus) with N0 (via Ncore); this interaction allows P to chaperon N0 to avoid N polymerization before encapsidation. Interacts (via C-terminus) with N-RNA template; this interaction positions the polymerase on the template for both transcription and replication. Interacts with host RPS6KB1 kinase; this interaction may play a role in the viral replication and transcription.

Essential cofactor of the RNA polymerase L that plays a central role in the transcription and replication by forming the polymerase complex with RNA polymerase L and recruiting L to the genomic N-RNA template for RNA synthesis. Also plays a central role in the encapsidation of nascent RNA chains by forming the encapsidation complex with the nucleocapsid protein N (N-P complex). Acts as a chaperone for newly synthesized free N protein, so-called N0, allowing encapsidation of nascent RNA chains during replication. The nucleoprotein protein N prevents excessive phosphorylation of P, which leads to down-regulation of viral transcription/ replication. Participates, together with N, in the formation of viral factories (viroplasms), which are large inclusions in the host cytoplasm where replication takes place. The sequence is that of Phosphoprotein from Mumps virus genotype B (strain Miyahara vaccine) (MuV).